Consider the following 242-residue polypeptide: Triosephosphate isomerase (242 aa).

9–11 (NWK) provides a ligand contact to substrate. Catalysis depends on His90, which acts as the Electrophile. Residue Glu162 is the Proton acceptor of the active site. Substrate-binding positions include Gly168, Ser205, and 226 to 227 (GG).

This sequence belongs to the triosephosphate isomerase family. Homodimer.

Its subcellular location is the cytoplasm. It carries out the reaction D-glyceraldehyde 3-phosphate = dihydroxyacetone phosphate. It participates in carbohydrate biosynthesis; gluconeogenesis. It functions in the pathway carbohydrate degradation; glycolysis; D-glyceraldehyde 3-phosphate from glycerone phosphate: step 1/1. In terms of biological role, involved in the gluconeogenesis. Catalyzes stereospecifically the conversion of dihydroxyacetone phosphate (DHAP) to D-glyceraldehyde-3-phosphate (G3P). The protein is Triosephosphate isomerase of Azoarcus sp. (strain BH72).